A 319-amino-acid chain; its full sequence is Ribosomal RNA small subunit methyltransferase H (319 aa).

Residues 52 to 54, D70, F100, D126, and Q133 each bind S-adenosyl-L-methionine; that span reads GGH. A disordered region spans residues 289–319; sequence PKPLSPSELERQRNPRARSAKLRVAARSSQM.

This sequence belongs to the methyltransferase superfamily. RsmH family.

The protein resides in the cytoplasm. It carries out the reaction cytidine(1402) in 16S rRNA + S-adenosyl-L-methionine = N(4)-methylcytidine(1402) in 16S rRNA + S-adenosyl-L-homocysteine + H(+). Functionally, specifically methylates the N4 position of cytidine in position 1402 (C1402) of 16S rRNA. The sequence is that of Ribosomal RNA small subunit methyltransferase H from Synechococcus sp. (strain JA-2-3B'a(2-13)) (Cyanobacteria bacterium Yellowstone B-Prime).